We begin with the raw amino-acid sequence, 130 residues long: Aspartate 1-decarboxylase (130 aa).

The active-site Schiff-base intermediate with substrate; via pyruvic acid is Ser25. At Ser25 the chain carries Pyruvic acid (Ser). Thr57 serves as a coordination point for substrate. Tyr58 (proton donor) is an active-site residue. 73–75 is a binding site for substrate; sequence GAA.

The protein belongs to the PanD family. Heterooctamer of four alpha and four beta subunits. It depends on pyruvate as a cofactor. Post-translationally, is synthesized initially as an inactive proenzyme, which is activated by self-cleavage at a specific serine bond to produce a beta-subunit with a hydroxyl group at its C-terminus and an alpha-subunit with a pyruvoyl group at its N-terminus.

The protein resides in the cytoplasm. It carries out the reaction L-aspartate + H(+) = beta-alanine + CO2. It functions in the pathway cofactor biosynthesis; (R)-pantothenate biosynthesis; beta-alanine from L-aspartate: step 1/1. In terms of biological role, catalyzes the pyruvoyl-dependent decarboxylation of aspartate to produce beta-alanine. This chain is Aspartate 1-decarboxylase, found in Myxococcus xanthus (strain DK1622).